A 415-amino-acid chain; its full sequence is D-serine dehydratase (415 aa).

K68 carries the N6-(pyridoxal phosphate)lysine modification. Pyridoxal 5'-phosphate is bound by residues Y204, Y211, T253, G279, and N280. 2 residues coordinate Zn(2+): H385 and C387.

The protein belongs to the DSD1 family. As to quaternary structure, homodimer. The cofactor is pyridoxal 5'-phosphate. Zn(2+) is required as a cofactor.

It is found in the cytoplasm. Its subcellular location is the nucleus. It catalyses the reaction D-serine = pyruvate + NH4(+). Catalyzes the conversion of D-serine to pyruvate and ammonia. May play a role in D-serine detoxification. The protein is D-serine dehydratase of Schizosaccharomyces pombe (strain 972 / ATCC 24843) (Fission yeast).